We begin with the raw amino-acid sequence, 539 residues long: Fucosyltransferase 2 (539 aa).

Residues 1 to 5 are Cytoplasmic-facing; the sequence is MRITE. Residues 6–26 traverse the membrane as a helical; Signal-anchor for type II membrane protein segment; the sequence is ILALFMVLVPVSLVIVAMFGY. Residues 27 to 539 are Lumenal-facing; that stretch reads DQGNGFVQAS…SWGLKLVDNF (513 aa). N-linked (GlcNAc...) asparagine glycosylation is found at asparagine 44, asparagine 231, and asparagine 482.

It belongs to the glycosyltransferase 37 family. In terms of tissue distribution, expressed in roots, stems, leaves, flowers, siliques and seedlings.

The protein localises to the golgi apparatus. Its subcellular location is the golgi stack membrane. The protein operates within protein modification; protein glycosylation. In terms of biological role, may be involved in cell wall biosynthesis. May act as a fucosyltransferase. The chain is Fucosyltransferase 2 (FUT2) from Arabidopsis thaliana (Mouse-ear cress).